Here is a 158-residue protein sequence, read N- to C-terminus: C-type lectin BfL-1 (158 aa).

The first 21 residues, 1 to 21 (MGHFTFIGLCLLAMFLSLSGA), serve as a signal peptide directing secretion. 4 disulfides stabilise this stretch: Cys26/Cys37, Cys54/Cys154, Cys61/Cys156, and Cys129/Cys146. The C-type lectin domain occupies 33–155 (KNGLCYKVFS…CAALRPFLCQ (123 aa)). The Ca(2+) site is built by Gln119, Asp121, and Glu127. A Galactose-binding motif is present at residues 119 to 121 (QPD). Residue Asn134 is glycosylated (N-linked (GlcNAc...) asparagine). The Ca(2+) site is built by Asn142 and Asp143.

It belongs to the true venom lectin family. Homodimer; non-covalently linked. Expressed by the venom gland.

The protein localises to the secreted. Functionally, galactose-binding lectin which recognizes specific carbohydrate structures and agglutinates a variety of animal cells by binding to cell-surface glycoproteins and glycolipids. May be a calcium-dependent lectin. In Bungarus fasciatus (Banded krait), this protein is C-type lectin BfL-1.